A 202-amino-acid polypeptide reads, in one-letter code: Transcription factor IBH1 (202 aa).

Residues 1–16 (MDAKRTPPPPTPPNPN) show a composition bias toward pro residues. A disordered region spans residues 1–33 (MDAKRTPPPPTPPNPNPSVIGSGAAADGGGFGR). Residues 136–185 (TSAAARAVPPPPRQQGEPPRAEALRRLVPGGAGMEYSSLLEETADYLRSL) enclose the bHLH domain.

The protein belongs to the bHLH protein family. In terms of assembly, interacts with ILI1. Binds to ILI5/BUL1 and BC1. Interacts with BCL1 and BCL2. In terms of tissue distribution, highly expressed in roots and at lower levels in leaf blades, leaf sheaths, lamina joint, stems and panicles.

Functionally, atypical and probable non DNA-binding bHLH transcription factor that acts as a negative regulator of cell elongation and plant development. Binds the transcription factor ILI1 and forms a heterodimer of antagonistic bHLH transcription factors that function downstream of BZR1 to mediate brassinosteroid regulation of cell elongation and lamina inclination. The chain is Transcription factor IBH1 from Oryza sativa subsp. japonica (Rice).